The following is a 461-amino-acid chain: Chromosomal replication initiator protein DnaA (461 aa).

Residues 1–84 form a domain I, interacts with DnaA modulators region; it reads MAVSLWQQCI…RFDIGSRPSA (84 aa). A domain II region spans residues 84 to 124; the sequence is AKKFEPAPVATVRAPNTQTKATVGTYFNTQAEPIANANHRS. Residues 125-341 form a domain III, AAA+ region region; sequence NINPTYQFDN…GALNRVIANA (217 aa). ATP contacts are provided by Gly-169, Gly-171, Lys-172, and Thr-173. Residues 342-461 form a domain IV, binds dsDNA region; that stretch reads NFTGRPITID…YANLIRTLSS (120 aa).

This sequence belongs to the DnaA family. Oligomerizes as a right-handed, spiral filament on DNA at oriC.

Its subcellular location is the cytoplasm. In terms of biological role, plays an essential role in the initiation and regulation of chromosomal replication. ATP-DnaA binds to the origin of replication (oriC) to initiate formation of the DNA replication initiation complex once per cell cycle. Binds the DnaA box (a 9 base pair repeat at the origin) and separates the double-stranded (ds)DNA. Forms a right-handed helical filament on oriC DNA; dsDNA binds to the exterior of the filament while single-stranded (ss)DNA is stabiized in the filament's interior. The ATP-DnaA-oriC complex binds and stabilizes one strand of the AT-rich DNA unwinding element (DUE), permitting loading of DNA polymerase. After initiation quickly degrades to an ADP-DnaA complex that is not apt for DNA replication. Binds acidic phospholipids. This is Chromosomal replication initiator protein DnaA from Shewanella putrefaciens (strain CN-32 / ATCC BAA-453).